We begin with the raw amino-acid sequence, 201 residues long: Ribosomal RNA large subunit methyltransferase E (201 aa).

S-adenosyl-L-methionine is bound by residues G49, W51, D69, D90, and D113. The active-site Proton acceptor is the K153.

The protein belongs to the class I-like SAM-binding methyltransferase superfamily. RNA methyltransferase RlmE family.

The protein resides in the cytoplasm. It carries out the reaction uridine(2552) in 23S rRNA + S-adenosyl-L-methionine = 2'-O-methyluridine(2552) in 23S rRNA + S-adenosyl-L-homocysteine + H(+). Functionally, specifically methylates the uridine in position 2552 of 23S rRNA at the 2'-O position of the ribose in the fully assembled 50S ribosomal subunit. The chain is Ribosomal RNA large subunit methyltransferase E from Desulfotalea psychrophila (strain LSv54 / DSM 12343).